The following is a 510-amino-acid chain: Cytochrome P450 703A2 (510 aa).

A helical membrane pass occupies residues 2–22 (ILVLASLFAVLILNVLLWRWL). Residue Cys451 coordinates heme.

It belongs to the cytochrome P450 family. The cofactor is heme.

Its subcellular location is the membrane. The enzyme catalyses dodecanoate + reduced [NADPH--hemoprotein reductase] + O2 = 7-hydroxydodecanoate + oxidized [NADPH--hemoprotein reductase] + H2O + H(+). In terms of biological role, involved in pollen wall development. Catalyzes the conversion of medium-chain saturated fatty acids to the corresponding monohydroxylated fatty acids, with a preferential hydroxylation of lauric acid at the C-7 position. In-chain hydroxylated fatty acids, together with omega-hydroxylated fatty acids, are key monomeric aliphatic building blocks for sporopollenin synthesis during exine formation. The polypeptide is Cytochrome P450 703A2 (Arabidopsis thaliana (Mouse-ear cress)).